We begin with the raw amino-acid sequence, 90 residues long: Probable Fe(2+)-trafficking protein (90 aa).

The protein belongs to the Fe(2+)-trafficking protein family.

In terms of biological role, could be a mediator in iron transactions between iron acquisition and iron-requiring processes, such as synthesis and/or repair of Fe-S clusters in biosynthetic enzymes. This is Probable Fe(2+)-trafficking protein from Pseudomonas putida (strain ATCC 700007 / DSM 6899 / JCM 31910 / BCRC 17059 / LMG 24140 / F1).